The following is a 263-amino-acid chain: Hydroxyethylthiazole kinase 1 (263 aa).

Position 42 (M42) interacts with substrate. 2 residues coordinate ATP: K118 and T164. G191 contributes to the substrate binding site.

This sequence belongs to the Thz kinase family. Mg(2+) serves as cofactor.

It carries out the reaction 5-(2-hydroxyethyl)-4-methylthiazole + ATP = 4-methyl-5-(2-phosphooxyethyl)-thiazole + ADP + H(+). It functions in the pathway cofactor biosynthesis; thiamine diphosphate biosynthesis; 4-methyl-5-(2-phosphoethyl)-thiazole from 5-(2-hydroxyethyl)-4-methylthiazole: step 1/1. Catalyzes the phosphorylation of the hydroxyl group of 4-methyl-5-beta-hydroxyethylthiazole (THZ). This chain is Hydroxyethylthiazole kinase 1, found in Clostridium botulinum (strain Langeland / NCTC 10281 / Type F).